We begin with the raw amino-acid sequence, 466 residues long: 3-isopropylmalate dehydratase large subunit (466 aa).

[4Fe-4S] cluster contacts are provided by Cys-347, Cys-407, and Cys-410.

Belongs to the aconitase/IPM isomerase family. LeuC type 1 subfamily. As to quaternary structure, heterodimer of LeuC and LeuD. It depends on [4Fe-4S] cluster as a cofactor.

The enzyme catalyses (2R,3S)-3-isopropylmalate = (2S)-2-isopropylmalate. It participates in amino-acid biosynthesis; L-leucine biosynthesis; L-leucine from 3-methyl-2-oxobutanoate: step 2/4. In terms of biological role, catalyzes the isomerization between 2-isopropylmalate and 3-isopropylmalate, via the formation of 2-isopropylmaleate. The polypeptide is 3-isopropylmalate dehydratase large subunit (Shigella dysenteriae serotype 1 (strain Sd197)).